The chain runs to 324 residues: Phospho-N-acetylmuramoyl-pentapeptide-transferase (324 aa).

10 helical membrane passes run 9–29 (TFAVAFIITVIGVPLFIPFLV), 54–74 (MGAVVFITAMLISFLIFSFIG), 77–97 (VSAATWLLFIALALFGALGFL), 117–137 (FLGQVAISILFYLVYHFSDFA), 147–167 (IEVDLGWFFVIFILFWLVGFS), 176–196 (LDGLVSGLSVIAFSAFGVIAF), 201–221 (MDVAIFCFAIVGGMLGFLLFN), 227–247 (IFMGDTGSLALGGSIAAVSIL), 253–273 (LLLLIGIIFVIETASVILQVF), and 304–324 (VLTFWGIGLVGAVISVCVVIF).

It belongs to the glycosyltransferase 4 family. MraY subfamily. The cofactor is Mg(2+).

It is found in the cell membrane. The catalysed reaction is UDP-N-acetyl-alpha-D-muramoyl-L-alanyl-gamma-D-glutamyl-meso-2,6-diaminopimeloyl-D-alanyl-D-alanine + di-trans,octa-cis-undecaprenyl phosphate = di-trans,octa-cis-undecaprenyl diphospho-N-acetyl-alpha-D-muramoyl-L-alanyl-D-glutamyl-meso-2,6-diaminopimeloyl-D-alanyl-D-alanine + UMP. It participates in cell wall biogenesis; peptidoglycan biosynthesis. Its function is as follows. Catalyzes the initial step of the lipid cycle reactions in the biosynthesis of the cell wall peptidoglycan: transfers peptidoglycan precursor phospho-MurNAc-pentapeptide from UDP-MurNAc-pentapeptide onto the lipid carrier undecaprenyl phosphate, yielding undecaprenyl-pyrophosphoryl-MurNAc-pentapeptide, known as lipid I. The protein is Phospho-N-acetylmuramoyl-pentapeptide-transferase of Listeria welshimeri serovar 6b (strain ATCC 35897 / DSM 20650 / CCUG 15529 / CIP 8149 / NCTC 11857 / SLCC 5334 / V8).